The primary structure comprises 280 residues: Energy-coupling factor transporter ATP-binding protein EcfA2 (280 aa).

Residues 3–245 form the ABC transporter domain; the sequence is IEFKNVSYTY…VELLESKQLG (243 aa). An ATP-binding site is contributed by 40–47; that stretch reads GHTGSGKS.

This sequence belongs to the ABC transporter superfamily. Energy-coupling factor EcfA family. In terms of assembly, forms a stable energy-coupling factor (ECF) transporter complex composed of 2 membrane-embedded substrate-binding proteins (S component), 2 ATP-binding proteins (A component) and 2 transmembrane proteins (T component).

It localises to the cell membrane. ATP-binding (A) component of a common energy-coupling factor (ECF) ABC-transporter complex. Unlike classic ABC transporters this ECF transporter provides the energy necessary to transport a number of different substrates. This Streptococcus agalactiae serotype Ia (strain ATCC 27591 / A909 / CDC SS700) protein is Energy-coupling factor transporter ATP-binding protein EcfA2.